The primary structure comprises 715 residues: Polyribonucleotide nucleotidyltransferase (715 aa).

Mg(2+) contacts are provided by Asp-493 and Asp-499. One can recognise a KH domain in the interval 560–619; sequence PRMITIKINPEKIRDVIGKGGSVIRALTEETGTTIDISDDGVVTIASTNSDGMAEAKKRI. Residues 629–697 form the S1 motif domain; sequence GQVYEGTVLK…EKGRVRLSAK (69 aa).

Belongs to the polyribonucleotide nucleotidyltransferase family. Requires Mg(2+) as cofactor.

The protein localises to the cytoplasm. The enzyme catalyses RNA(n+1) + phosphate = RNA(n) + a ribonucleoside 5'-diphosphate. Functionally, involved in mRNA degradation. Catalyzes the phosphorolysis of single-stranded polyribonucleotides processively in the 3'- to 5'-direction. The polypeptide is Polyribonucleotide nucleotidyltransferase (Burkholderia lata (strain ATCC 17760 / DSM 23089 / LMG 22485 / NCIMB 9086 / R18194 / 383)).